The sequence spans 23 residues: Acidic phospholipase A2 Ts-A2 (23 aa).

Requires Ca(2+) as cofactor. Post-translationally, contains 7 disulfide bonds. Expressed by the venom gland.

It is found in the secreted. It catalyses the reaction a 1,2-diacyl-sn-glycero-3-phosphocholine + H2O = a 1-acyl-sn-glycero-3-phosphocholine + a fatty acid + H(+). In terms of biological role, exhibits moderate hydrolytic activities and prefers the anionic micelles (dPPC with deoxycholate) to the zwitterionic micelles (dPPC with Triton X-100). PLA2 catalyzes the calcium-dependent hydrolysis of the 2-acyl groups in 3-sn-phosphoglycerides. In Trimeresurus stejnegeri (Chinese green tree viper), this protein is Acidic phospholipase A2 Ts-A2.